A 2193-amino-acid chain; its full sequence is MGAQVSTQKTGAHETGLSASGNSIIHYTNINYYKDAASNSANRQDFTQDPGKFTEPVKDIMIKSMPALNSPTAEECGYSDRVRSITLGNSTITTQECANVVVGYGTWPDYLHDDEATAEDQPTQPDVATCRFYTLESIQWQKTSDGWWWKFPEALKDMGLFGQNMHYHYLGRSGYTIHVQCNASKFHQGCLLVVCVPEAEMGCATVANEVNAAALSSGETAKHFAKTGATGTHTVQSIVTNAGMGVGVGNLTIFPHQWINLRTNNSATIVMPYINSVPMDNMFRHYNFTLMIIPFVPLDFTAEASTYVPITVTVAPMCAEYNGLRLASHQGLPTMNTPGSNQFLTSDDFQSPSAMPQFDVTPELRIPGEVKNLMEIAEVDSVVPVNNTQDSVYNMDVYKIPVSGGNQLSTQVFGFQMQPGLNSVFKRTLLGEILNYYAHWSGSVKLTFVFCGSAMALAKFLLAYSPPGADPPKSRKEAMLGTHVIWDIGLQSSCVLCVPWISQTHYRLVQQDEYTSAGYVTCWYQTSLVVPPGAPATCGVLCLASACNDFSVRMLRDTPFIEQKQLLQGDVEEAVNRAVARVADTLPTGPRNSESIPALTAAETGHTSQVVPGDTMQTRHVKNYHSRTESSVENFLCRAACVYITKYKTKDSDPVQRYANWRINTRQMVQLRRKFELFTYLRFDMEVTFVITSSQDDGTQLAQDMPVLTHQVMYIPPGGPVPNSVTDFAWQSSTNPSIFWTEGNAPARMSIPFISIGNAYSNFYDGWSHFTQDGVYGFNSLNNMGSIYIRHVNEQSPYAITSTVRVYFKPKHVRAWVPRPPRLCAYEKSSNVNFKPTDVTTSRTSITEVPSLRPSVVNTGAFGQQSGAAYVGNYRVVNRHLATHVDWQNCVWEDYNRDLLVSTTTAHGCDTIARCQCTTGVYFCASRNKHYPVSFEGPGLVEVQESEYYPRRYQSHVLLAAGFSEPGDCGGILRCEHGVIGLVTMGGEGVVGFADVRDLLWLEDDAMEQGVKDYVEQLGNAFGSGFTNQICEQVNLLKESLVGHDSILEKSLKALVKIISALVIVVRNHDDLITVTATLALIGCTSSPWRWLKHKVSQYYGIPMAERQSNGWLKKFTEMTNACKGMEWIAIKIQKFIEWLKLKILPEVKEKHEFLNRLKQLPLLESQIATIEQSAPSQSDQEQLFSNVQYFAHYCRKYAPLYAAEAKRVFSLEKKMSNYIQFKSKCRIEPVCLLLHGSPGAGKSVATSLIGRSLAEKLNSSVYSLPPDPDHFDGYKQQAVVIMDDLCQNPDGKDVSLFCQMVSSVDFVPPMAALEEKGILFTSPFVLASTNAGSINAPTVSDSRALARRFHFDMNIEVISMYSQNGKINMPMSVKTCDEECCPVNFKRCCPLVCGKAIQFIDRRTQVRYSLDMLVTEMFREYNHRHSVGATLEALFQGPPVIREIKISVAPETPPPPAIADLLKSVDSEAVREYCKEKGWLVPEVNSTLQIEKHVSRAFICLQALTTFVSVAGIIYIIYKLFAGFQGAYTGMPNQKPKVPTLRQAKVQGPAFEFAVAMMKRNASTVKTEYGEFTMLGIYDRWAVLPHHAKPGPTILMNDQEIGVLDAKELVDKDGTNLELTLLKLNRNEKFRDIRGFLAREEAEVNEAVLAINTSKFPNMYIPVGQVTDYGFLNLGGTPTKRMLMYNFPTRAGQCGGVLMSTGKVLGIHVGGNGHQGFSAALLRHYFNEEQGEIEFIESSKDAGFPVINTPSKTKLEPSVFHQVFEGNKEPAVLRNGDPRLKVNFEEAIFSKYIGNINTHVDEYMLEAVDHYAGQLATLDISTEPMKLEDAVYGTEGLEALDLTTSAGYPYVAIGIKKRDILSKKTKDLTKLKECMDKYGLNLPMVTYVKDELRSSEKVAKGKSRLIEASSLNDSVAMRQTFGNLYKTFHLNPGIVTGSAVGCDPDLFWSKIPVMLDGHLIAFDYSGYDASLSPVWFACLKLLLEKLGYTHRETNYIDYLCNSHHLYRDKHYFVRGGMPSGCSGTSIFNSMINNIIIRTLMLKVYKGIDLDQFRMIAYGDDVIASYPWPIDASLLAEAGKGYGLIMTPADKGECFNEVTWTNVTFLKRYFRADEQYPFLVHPVMPMKDIHESIRWTKDPKNTQDHVRSLCLLAWHNGEQEYEEFIRKIRSVPVGRCLTLPAFSTLRRKWLDSF.

Glycine 2 carries the N-myristoyl glycine; by host lipid modification. The Cytoplasmic segment spans residues 2–1503; sequence GAQVSTQKTG…HVSRAFICLQ (1502 aa). Residues 565–582 form an amphipathic alpha-helix region; it reads QLLQGDVEEAVNRAVARV. Residues histidine 880 and aspartate 898 each act as for protease 2A activity in the active site. Positions 915 and 917 each coordinate Zn(2+). Residue cysteine 969 is the For protease 2A activity of the active site. Cysteine 975 and histidine 977 together coordinate Zn(2+). A membrane-binding region spans residues 1109–1181; it reads SNGWLKKFTE…EQSAPSQSDQ (73 aa). The interval 1109–1247 is oligomerization; the sequence is SNGWLKKFTE…SPGAGKSVAT (139 aa). An RNA-binding region spans residues 1130–1134; that stretch reads AIKIQ. The SF3 helicase domain occupies 1213–1369; sequence EKKMSNYIQF…SMYSQNGKIN (157 aa). Residues cysteine 1377, cysteine 1389, and cysteine 1394 each contribute to the Zn(2+) site. A C4-type; degenerate zinc finger spans residues 1377–1394; the sequence is CDEECCPVNFKRCCPLVC. Positions 1421–1428 are RNA-binding; sequence EYNHRHSV. The tract at residues 1432-1437 is oligomerization; that stretch reads LEALFQ. Residues 1504-1519 lie within the membrane without spanning it; the sequence is ALTTFVSVAGIIYIIY. Topologically, residues 1520-2193 are cytoplasmic; the sequence is KLFAGFQGAY…TLRRKWLDSF (674 aa). Tyrosine 1529 carries the post-translational modification O-(5'-phospho-RNA)-tyrosine. Residues 1549–1727 enclose the Peptidase C3 domain; sequence GPAFEFAVAM…FSAALLRHYF (179 aa). Active-site for protease 3C activity residues include histidine 1588, glutamate 1619, and cysteine 1695. Residues 1958–2074 enclose the RdRp catalytic domain; that stretch reads GHLIAFDYSG…SYPWPIDASL (117 aa). Mg(2+) contacts are provided by aspartate 1964 and aspartate 2060.

The protein belongs to the picornaviruses polyprotein family. In terms of assembly, interacts with capsid protein VP1 and capsid protein VP3 to form heterotrimeric protomers. As to quaternary structure, interacts with capsid protein VP0, and capsid protein VP3 to form heterotrimeric protomers. Five protomers subsequently associate to form pentamers which serve as building blocks for the capsid. Interacts with capsid protein VP2, capsid protein VP3 and capsid protein VP4 following cleavage of capsid protein VP0. Interacts with capsid protein VP1 and capsid protein VP3 in the mature capsid. Interacts with host CD55; this interaction promotes virus attachment to the host cell and subsequent internalization. In terms of assembly, interacts with capsid protein VP0 and capsid protein VP1 to form heterotrimeric protomers. Five protomers subsequently associate to form pentamers which serve as building blocks for the capsid. Interacts with capsid protein VP4 in the mature capsid. Interacts with protein 2C; this interaction may be important for virion morphogenesis. Interacts with host CD55; this interaction promotes virus attachment to the host cell and subsequent internalization. As to quaternary structure, interacts with capsid protein VP1 and capsid protein VP3. Homodimer. In terms of assembly, homohexamer; forms a hexameric ring structure with 6-fold symmetry characteristic of AAA+ ATPases. Interacts (via N-terminus) with host RTN3 (via reticulon domain); this interaction is important for viral replication. Interacts with capsid protein VP3; this interaction may be important for virion morphogenesis. As to quaternary structure, interacts with protein 3CD. Homodimer. Interacts with host GBF1. Interacts (via GOLD domain) with host ACBD3 (via GOLD domain); this interaction allows the formation of a viral protein 3A/ACBD3 heterotetramer with a 2:2 stoichiometry, which will stimulate the recruitment of host PI4KB in order to synthesize PI4P at the viral RNA replication sites. In terms of assembly, interacts with RNA-directed RNA polymerase. As to quaternary structure, interacts with protein 3AB and with RNA-directed RNA polymerase. Interacts with Viral protein genome-linked and with protein 3CD. The cofactor is Mg(2+). Specific enzymatic cleavages in vivo by the viral proteases yield processing intermediates and the mature proteins. Post-translationally, myristoylation is required for the formation of pentamers during virus assembly. Further assembly of 12 pentamers and a molecule of genomic RNA generates the provirion. In terms of processing, during virion maturation, immature virions are rendered infectious following cleavage of VP0 into VP4 and VP2. This maturation seems to be an autocatalytic event triggered by the presence of RNA in the capsid and it is followed by a conformational change infectious virion. Myristoylation is required during RNA encapsidation and formation of the mature virus particle. Post-translationally, VPg is uridylylated by the polymerase into VPg-pUpU. This acts as a nucleotide-peptide primer for the genomic RNA replication.

It is found in the virion. Its subcellular location is the host cytoplasm. The protein resides in the host cytoplasmic vesicle membrane. The protein localises to the host nucleus. The catalysed reaction is a ribonucleoside 5'-triphosphate + H2O = a ribonucleoside 5'-diphosphate + phosphate + H(+). The enzyme catalyses Selective cleavage of Tyr-|-Gly bond in the picornavirus polyprotein.. It carries out the reaction RNA(n) + a ribonucleoside 5'-triphosphate = RNA(n+1) + diphosphate. It catalyses the reaction Selective cleavage of Gln-|-Gly bond in the poliovirus polyprotein. In other picornavirus reactions Glu may be substituted for Gln, and Ser or Thr for Gly.. Replication or transcription is subject to high level of random mutations by the nucleotide analog ribavirin. Forms an icosahedral capsid of pseudo T=3 symmetry with capsid proteins VP2 and VP3. The capsid is 300 Angstroms in diameter, composed of 60 copies of each capsid protein and enclosing the viral positive strand RNA genome. Capsid protein VP1 mainly forms the vertices of the capsid. Capsid protein VP1 interacts with host cell receptor to provide virion attachment to target host cells. This attachment induces virion internalization. Tyrosine kinases are probably involved in the entry process. After binding to its receptor, the capsid undergoes conformational changes. Capsid protein VP1 N-terminus (that contains an amphipathic alpha-helix) and capsid protein VP4 are externalized. Together, they shape a pore in the host membrane through which viral genome is translocated to host cell cytoplasm. Functionally, forms an icosahedral capsid of pseudo T=3 symmetry with capsid proteins VP2 and VP3. The capsid is 300 Angstroms in diameter, composed of 60 copies of each capsid protein and enclosing the viral positive strand RNA genome. Its function is as follows. Lies on the inner surface of the capsid shell. After binding to the host receptor, the capsid undergoes conformational changes. Capsid protein VP4 is released, Capsid protein VP1 N-terminus is externalized, and together, they shape a pore in the host membrane through which the viral genome is translocated into the host cell cytoplasm. In terms of biological role, component of immature procapsids, which is cleaved into capsid proteins VP4 and VP2 after maturation. Allows the capsid to remain inactive before the maturation step. Cysteine protease that cleaves viral polyprotein and specific host proteins. It is responsible for the autocatalytic cleavage between the P1 and P2 regions, which is the first cleavage occurring in the polyprotein. Also cleaves the host translation initiation factor EIF4G1, in order to shut down the capped cellular mRNA translation. Inhibits the host nucleus-cytoplasm protein and RNA trafficking by cleaving host members of the nuclear pores. Counteracts stress granule formation probably by antagonizing its assembly or promoting its dissassembly. Functionally, plays an essential role in the virus replication cycle by acting as a viroporin. Creates a pore in the host endoplasmic reticulum and as a consequence releases Ca2+ in the cytoplasm of infected cell. In turn, high levels of cytoplasmic calcium may trigger membrane trafficking and transport of viral ER-associated proteins to viroplasms, sites of viral genome replication. Its function is as follows. Induces and associates with structural rearrangements of intracellular membranes. Displays RNA-binding, nucleotide binding and NTPase activities. May play a role in virion morphogenesis and viral RNA encapsidation by interacting with the capsid protein VP3. In terms of biological role, localizes the viral replication complex to the surface of membranous vesicles. Together with protein 3CD binds the Cis-Active RNA Element (CRE) which is involved in RNA synthesis initiation. Acts as a cofactor to stimulate the activity of 3D polymerase, maybe through a nucleid acid chaperone activity. Localizes the viral replication complex to the surface of membranous vesicles. It inhibits host cell endoplasmic reticulum-to-Golgi apparatus transport and causes the disassembly of the Golgi complex, possibly through GBF1 interaction. This would result in depletion of MHC, trail receptors and IFN receptors at the host cell surface. Plays an essential role in viral RNA replication by recruiting ACBD3 and PI4KB at the viral replication sites, thereby allowing the formation of the rearranged membranous structures where viral replication takes place. Functionally, acts as a primer for viral RNA replication and remains covalently bound to viral genomic RNA. VPg is uridylylated prior to priming replication into VPg-pUpU. The oriI viral genomic sequence may act as a template for this. The VPg-pUpU is then used as primer on the genomic RNA poly(A) by the RNA-dependent RNA polymerase to replicate the viral genome. During genome replication, the VPg-RNA linkage is removed by the host TDP2, thereby accelerating replication. During the late stage of the replication cycle, host TDP2 is excluded from sites of viral RNA synthesis and encapsidation, allowing for the generation of progeny virions. Its function is as follows. Involved in the viral replication complex and viral polypeptide maturation. It exhibits protease activity with a specificity and catalytic efficiency that is different from protease 3C. Protein 3CD lacks polymerase activity. Protein 3CD binds to the 5'UTR of the viral genome. In terms of biological role, replicates the viral genomic RNA on the surface of intracellular membranes. May form linear arrays of subunits that propagate along a strong head-to-tail interaction called interface-I. Covalently attaches UMP to a tyrosine of VPg, which is used to prime RNA synthesis. The positive stranded RNA genome is first replicated at virus induced membranous vesicles, creating a dsRNA genomic replication form. This dsRNA is then used as template to synthesize positive stranded RNA genomes. ss(+)RNA genomes are either translated, replicated or encapsidated. Major viral protease that mediates proteolytic processing of the polyprotein. Cleaves host EIF5B, contributing to host translation shutoff. Also cleaves host PABPC1, contributing to host translation shutoff. Cleaves host NLRP1, triggers host N-glycine-mediated degradation of the autoinhibitory NLRP1 N-terminal fragment. The protein is Genome polyprotein of Echovirus 12 (strain Travis).